The primary structure comprises 1157 residues: Hephaestin (1157 aa).

A signal peptide spans 1 to 18 (MKAGHLLWALLLMHSLWS). At 19 to 1109 (IPTDGAIRNY…PIKDVEILSS (1091 aa)) the chain is on the extracellular side. Plastocyanin-like domains lie at 24 to 206 (AIRN…LITC), 218 to 366 (QRKD…VDSC), 370 to 559 (PPVD…LLVC), 569 to 717 (KQKG…VSQC), 730 to 902 (ASRV…LVIC), and 910 to 1066 (NGGR…SHEE). Residues Asn-49 and Asn-54 are each glycosylated (N-linked (GlcNAc...) asparagine). 2 residues coordinate Na(+): Gly-70 and Tyr-73. His-126 and His-128 together coordinate Cu(2+). His-126 is a binding site for O2. Lys-134, Asp-152, and Asp-153 together coordinate Ca(2+). Asn-164 carries an N-linked (GlcNAc...) asparagine glycan. A disulfide bond links Cys-180 and Cys-206. Residues His-186 and His-188 each contribute to the Cu(2+) site. O2 is bound at residue His-186. Asn-236 is a glycosylation site (N-linked (GlcNAc...) asparagine). Ser-265 contacts Na(+). Cys-285 and Cys-366 form a disulfide bridge. Residues His-304, Cys-347, and His-352 each contribute to the Cu(2+) site. The Na(+) site is built by Tyr-416, Gly-425, and Tyr-428. A disulfide bridge connects residues Cys-533 and Cys-559. Asn-587 is a glycosylation site (N-linked (GlcNAc...) asparagine). Residue Ser-616 participates in Na(+) binding. Residues Cys-636 and Cys-717 are joined by a disulfide bond. Cu(2+)-binding residues include His-655, Cys-698, His-703, and Met-708. 2 N-linked (GlcNAc...) asparagine glycosylation sites follow: Asn-713 and Asn-757. Na(+) is bound by residues Phe-768 and Gly-777. An intrachain disulfide couples Cys-876 to Cys-902. N-linked (GlcNAc...) asparagine glycosylation occurs at Asn-930. Residues His-999, His-1002, His-1004, His-1044, Cys-1045, His-1046, His-1050, and Met-1055 each coordinate Cu(2+). O2 contacts are provided by His-1002 and His-1004. His-1046 is a binding site for O2. A helical membrane pass occupies residues 1110-1130 (ALIAICVLLLLIALALGGVVW). Residues 1131–1157 (YQHRQRKLRRNRRSILDDSFKLLSLKQ) lie on the Cytoplasmic side of the membrane. Residues Ser-1144, Ser-1149, and Ser-1154 each carry the phosphoserine modification.

Belongs to the multicopper oxidase family. Part of a complex composed of SLC40A1/ferroportin, TF/transferrin and HEPH/hephaestin that transfers iron from cells to transferrin. Cu cation is required as a cofactor.

Its subcellular location is the basolateral cell membrane. It carries out the reaction 4 Fe(2+) + O2 + 4 H(+) = 4 Fe(3+) + 2 H2O. Its function is as follows. Plasma membrane ferroxidase that mediates the extracellular conversion of ferrous/Fe(2+) iron into its ferric/Fe(3+) form. Couples ferroportin which specifically exports ferrous/Fe(2+) iron from cells to transferrin that only binds and shuttles extracellular ferric/Fe(3+) iron throughout the body. By helping iron transfer from cells to blood mainly contributes to dietary iron absorption by the intestinal epithelium and more generally regulates iron levels in the body. This is Hephaestin from Mus musculus (Mouse).